Consider the following 399-residue polypeptide: Rhodopsin, G0-coupled (399 aa).

Topologically, residues 1–17 are extracellular; it reads MPFPLNRTDTALVISPS. Asn6 is a glycosylation site (N-linked (GlcNAc...) asparagine). Residues 18 to 43 form a helical membrane-spanning segment; the sequence is EFRIIGIFISICCIIGVLGNLLIIIV. Over 44–55 the chain is Cytoplasmic; sequence FAKRRSVRRPIN. Residues 56–81 form a helical membrane-spanning segment; sequence FFVLNLAVSDLIVALLGYPMTAASAF. Topologically, residues 82 to 95 are extracellular; it reads SNRWIFDNIGCKIY. Cys92 and Cys169 form a disulfide bridge. The helical transmembrane segment at 96–115 threads the bilayer; the sequence is AFLCFNSGVISIMTHAALSF. The Cytoplasmic portion of the chain corresponds to 116 to 134; the sequence is CRYIIICQYGYRKKITQTT. The chain crosses the membrane as a helical span at residues 135–158; it reads VLRTLFSIWSFAMFWTLSPLFGWS. Over 159–182 the chain is Extracellular; the sequence is SYVIEVVPVSCSVNWYGHGLGDVS. Residues 183 to 210 form a helical membrane-spanning segment; that stretch reads YTISVIVAVYVFPLSIIVFSYGMILQEK. Residues 211–240 are Cytoplasmic-facing; the sequence is VCKDSRKNGIRAQQRYTPRFIQDIEQRVTF. Residues 241–263 form a helical membrane-spanning segment; it reads ISFLMMAAFMVAWTPYAIMSALA. Topologically, residues 264-271 are extracellular; it reads IGSFNVEN. Residues 272 to 295 form a helical membrane-spanning segment; it reads SFAALPTLFAKASCAYNPFIYAFT. Lys282 is subject to N6-(retinylidene)lysine. Over 296 to 399 the chain is Cytoplasmic; the sequence is NANFRDTVVE…NTFTADFSVI (104 aa).

The protein belongs to the G-protein coupled receptor 1 family. Opsin subfamily. In terms of processing, phosphorylated on some or all of the serine and threonine residues present in the C-terminal region. As to expression, retina. Expressed in the hyperpolarizing cell layer of the photoreceptor cells with its photoreceptive region adjacent to the lens.

The protein resides in the membrane. Visual pigments are the light-absorbing molecules that mediate vision. They consist of an apoprotein, opsin, covalently linked to cis-retinal. The protein is Rhodopsin, G0-coupled (SCOP2) of Mizuhopecten yessoensis (Japanese scallop).